Consider the following 81-residue polypeptide: Exodeoxyribonuclease 7 small subunit (81 aa).

Basic and acidic residues predominate over residues 60 to 70; the sequence is LVDKDGNEKAL. The tract at residues 60–81 is disordered; sequence LVDKDGNEKALDPQNASAPEEE.

The protein belongs to the XseB family. As to quaternary structure, heterooligomer composed of large and small subunits.

The protein resides in the cytoplasm. The enzyme catalyses Exonucleolytic cleavage in either 5'- to 3'- or 3'- to 5'-direction to yield nucleoside 5'-phosphates.. Its function is as follows. Bidirectionally degrades single-stranded DNA into large acid-insoluble oligonucleotides, which are then degraded further into small acid-soluble oligonucleotides. The polypeptide is Exodeoxyribonuclease 7 small subunit (Lactobacillus johnsonii (strain CNCM I-12250 / La1 / NCC 533)).